A 362-amino-acid polypeptide reads, in one-letter code: Protein RecA (362 aa).

77–84 serves as a coordination point for ATP; that stretch reads GPESSGKT.

It belongs to the RecA family.

Its subcellular location is the cytoplasm. Can catalyze the hydrolysis of ATP in the presence of single-stranded DNA, the ATP-dependent uptake of single-stranded DNA by duplex DNA, and the ATP-dependent hybridization of homologous single-stranded DNAs. It interacts with LexA causing its activation and leading to its autocatalytic cleavage. The sequence is that of Protein RecA from Allorhizobium ampelinum (strain ATCC BAA-846 / DSM 112012 / S4) (Agrobacterium vitis (strain S4)).